The following is a 199-amino-acid chain: Ciliary neurotrophic factor (199 aa).

Belongs to the CNTF family. In terms of tissue distribution, nervous system.

It localises to the cytoplasm. In terms of biological role, CNTF is a survival factor for various neuronal cell types. Seems to prevent the degeneration of motor axons after axotomy. The protein is Ciliary neurotrophic factor (CNTF) of Oryctolagus cuniculus (Rabbit).